A 333-amino-acid chain; its full sequence is Adenosine deaminase (333 aa).

Zn(2+)-binding residues include His12 and His14. Substrate-binding residues include His14, Asp16, and Gly170. Residue His197 participates in Zn(2+) binding. Glu200 functions as the Proton donor in the catalytic mechanism. A Zn(2+)-binding site is contributed by Asp278. Residue Asp279 participates in substrate binding.

This sequence belongs to the metallo-dependent hydrolases superfamily. Adenosine and AMP deaminases family. Adenosine deaminase subfamily. It depends on Zn(2+) as a cofactor.

It carries out the reaction adenosine + H2O + H(+) = inosine + NH4(+). The catalysed reaction is 2'-deoxyadenosine + H2O + H(+) = 2'-deoxyinosine + NH4(+). Catalyzes the hydrolytic deamination of adenosine and 2-deoxyadenosine. In Escherichia coli O45:K1 (strain S88 / ExPEC), this protein is Adenosine deaminase.